A 221-amino-acid polypeptide reads, in one-letter code: Endonuclease V (221 aa).

Aspartate 44 and aspartate 112 together coordinate Mg(2+).

The protein belongs to the endonuclease V family. Mg(2+) is required as a cofactor.

It localises to the cytoplasm. The catalysed reaction is Endonucleolytic cleavage at apurinic or apyrimidinic sites to products with a 5'-phosphate.. Its function is as follows. DNA repair enzyme involved in the repair of deaminated bases. Selectively cleaves double-stranded DNA at the second phosphodiester bond 3' to a deoxyinosine leaving behind the intact lesion on the nicked DNA. This chain is Endonuclease V, found in Trichormus variabilis (strain ATCC 29413 / PCC 7937) (Anabaena variabilis).